Here is a 321-residue protein sequence, read N- to C-terminus: uncharacterized protein (321 aa).

Residue 28–35 (GPINSGKT) coordinates ATP.

This sequence belongs to the archaeal ATPase family.

This is an uncharacterized protein from Pyrococcus horikoshii (strain ATCC 700860 / DSM 12428 / JCM 9974 / NBRC 100139 / OT-3).